Reading from the N-terminus, the 1103-residue chain is Voltage-dependent calcium channel subunit alpha-2/delta-1 (1103 aa).

The first 24 residues, 1–24, serve as a signal peptide directing secretion; that stretch reads MAAGCLLALTLTLFQSGLIGPSSE. Topologically, residues 25–1073 are extracellular; the sequence is EPFPSPVTIK…VLEDYTDCGG (1049 aa). N-linked (GlcNAc...) asparagine glycosylation is present at N92. S119 is subject to Phosphoserine. 2 N-linked (GlcNAc...) asparagine glycosylation sites follow: N136 and N184. In terms of domain architecture, VWFA spans 253–430; it reads DMLILVDVSG…INTQEYLDVL (178 aa). A divalent metal cation contacts are provided by D259, S261, and S263. The short motif at 259–263 is the MIDAS-like motif element; that stretch reads DVSGS. 2 N-linked (GlcNAc...) asparagine glycosylation sites follow: N324 and N348. C404 and C1059 are joined by a disulfide. The region spanning 446–537 is the Cache domain; it reads WTNVYLDALE…QPKPIGVGIP (92 aa). N-linked (GlcNAc...) asparagine glycosylation is found at N613, N781, and N888. A helical membrane pass occupies residues 1074–1094; that stretch reads VSGLNPSLWSIFGLQFILLWL. Residues 1095-1103 lie on the Cytoplasmic side of the membrane; that stretch reads VSGSRHYLL.

The protein belongs to the calcium channel subunit alpha-2/delta family. Dimer formed of alpha-2-1 and delta-1 chains; disulfide-linked. Voltage-dependent calcium channels are multisubunit complexes, consisting of alpha-1 (CACNA1), alpha-2 (CACNA2D), beta (CACNB) and delta (CACNA2D) subunits in a 1:1:1:1 ratio. Proteolytically processed into subunits alpha-2-1 and delta-1 that are disulfide-linked. As to expression, isoform 2A is expressed in skeletal muscle and aorta. Isoform 2B is expressed in brain. Isoform 2C is expressed in heart. Isoform 2D is expressed in heart and smooth muscle. Isoform 2E is expressed in smooth muscle. All five isoforms are expressed in the cardiovascular system.

Its subcellular location is the membrane. The protein localises to the cell membrane. Functionally, the alpha-2/delta subunit of voltage-dependent calcium channels regulates calcium current density and activation/inactivation kinetics of the calcium channel. Plays an important role in excitation-contraction coupling. The sequence is that of Voltage-dependent calcium channel subunit alpha-2/delta-1 (Cacna2d1) from Mus musculus (Mouse).